Reading from the N-terminus, the 372-residue chain is Chaperone protein DnaJ (372 aa).

A J domain is found at 5–69; that stretch reads DYYEVLGVDR…QKKARYDQFG (65 aa). The CR-type zinc finger occupies 129-211; sequence GKETEIEIPR…CSGKGKVRKR (83 aa). 8 residues coordinate Zn(2+): Cys-142, Cys-145, Cys-159, Cys-162, Cys-185, Cys-188, Cys-199, and Cys-202. 4 CXXCXGXG motif repeats span residues 142 to 149, 159 to 166, 185 to 192, and 199 to 206; these read CGTCHGSG, CSHCGGSG, CNYCEGTG, and CATCSGKG.

It belongs to the DnaJ family. As to quaternary structure, homodimer. The cofactor is Zn(2+).

The protein localises to the cytoplasm. Participates actively in the response to hyperosmotic and heat shock by preventing the aggregation of stress-denatured proteins and by disaggregating proteins, also in an autonomous, DnaK-independent fashion. Unfolded proteins bind initially to DnaJ; upon interaction with the DnaJ-bound protein, DnaK hydrolyzes its bound ATP, resulting in the formation of a stable complex. GrpE releases ADP from DnaK; ATP binding to DnaK triggers the release of the substrate protein, thus completing the reaction cycle. Several rounds of ATP-dependent interactions between DnaJ, DnaK and GrpE are required for fully efficient folding. Also involved, together with DnaK and GrpE, in the DNA replication of plasmids through activation of initiation proteins. The protein is Chaperone protein DnaJ of Shouchella clausii (strain KSM-K16) (Alkalihalobacillus clausii).